We begin with the raw amino-acid sequence, 248 residues long: tRNA (guanine-N(1)-)-methyltransferase (248 aa).

S-adenosyl-L-methionine contacts are provided by residues G117 and 137 to 142 (IGDFVL).

Belongs to the RNA methyltransferase TrmD family. In terms of assembly, homodimer.

It is found in the cytoplasm. It carries out the reaction guanosine(37) in tRNA + S-adenosyl-L-methionine = N(1)-methylguanosine(37) in tRNA + S-adenosyl-L-homocysteine + H(+). Specifically methylates guanosine-37 in various tRNAs. The polypeptide is tRNA (guanine-N(1)-)-methyltransferase (Polynucleobacter necessarius subsp. necessarius (strain STIR1)).